The following is a 498-amino-acid chain: Hexokinase-3 (498 aa).

The chain crosses the membrane as a helical span at residues 4–24; that stretch reads VAVAFAAVAVVAACSVAAVMV. In terms of domain architecture, Hexokinase spans 35–494; that stretch reads RTVVEILKEL…SSIGSALLVA (460 aa). The tract at residues 90–227 is hexokinase small subdomain; sequence TGREKGTYYA…GLDMHVAALV (138 aa). Glycine 104 and threonine 105 together coordinate ADP. 4 residues coordinate D-glucose: threonine 193, lysine 194, asparagine 228, and aspartate 229. Positions 228 to 483 are hexokinase large subdomain; the sequence is NDTVGALSLG…QYVVVKAMED (256 aa). Residue threonine 252 participates in ADP binding. D-glucose is bound by residues asparagine 255, glutamate 283, and glutamate 314. Glycine 448 is a binding site for ADP.

This sequence belongs to the hexokinase family. As to expression, expressed in roots, emerging lateral roots, vascular tissues of cotyledons, roots and leaves, root and shoot meristems, anther filaments and funiculi of mature seeds.

The protein localises to the mitochondrion outer membrane. The catalysed reaction is a D-hexose + ATP = a D-hexose 6-phosphate + ADP + H(+). It catalyses the reaction D-fructose + ATP = D-fructose 6-phosphate + ADP + H(+). It carries out the reaction D-glucose + ATP = D-glucose 6-phosphate + ADP + H(+). The protein operates within carbohydrate metabolism; hexose metabolism. Its pathway is carbohydrate degradation; glycolysis; D-glyceraldehyde 3-phosphate and glycerone phosphate from D-glucose: step 1/4. Its function is as follows. Fructose and glucose phosphorylating enzyme. May be involved in the phosphorylation of glucose during the export from mitochondrion to cytosol. Plays a role in plant growth and development, perhaps by mediating cross-talk between glucose and hormone response pathways. Involved in root hair cell development by mediating certain aspects of cross talk between glucose and ethylene response pathways. This chain is Hexokinase-3, found in Arabidopsis thaliana (Mouse-ear cress).